The primary structure comprises 794 residues: 6-hydroxypseudooxynicotine dehydrogenase complex subunit gamma (794 aa).

Heterohexamer of 2 alpha (kdhA), 2 beta (kdhB) and 2 gamma (kdhC) subunit. Dimer of heterotrimers. The cofactor is Mo-molybdopterin cytosine dinucleotide.

It carries out the reaction 6-hydroxypseudooxynicotine + A + H2O = 2,6-dihydroxypseudooxynicotine + AH2. The protein operates within alkaloid degradation; nicotine degradation. Functionally, molybdo-flavoprotein enzyme complex involved in nicotine degradation. The subunit gamma (large subunit) contains the substrate-binding sites, the subunit alpha (medium subunit) binds FAD and the subunit beta (small subunit) has a 2Fe-2S ferredoxin-type domain which binds 2 2Fe-2S clusters. This chain is 6-hydroxypseudooxynicotine dehydrogenase complex subunit gamma (kdhC), found in Paenarthrobacter nicotinovorans (Arthrobacter nicotinovorans).